The chain runs to 74 residues: RNA-binding protein Hfq (74 aa).

A Sm domain is found at 9–69; that stretch reads DQFLNQLRKE…ISTFMPQKNV (61 aa).

This sequence belongs to the Hfq family. Homohexamer.

Its function is as follows. RNA chaperone that binds small regulatory RNA (sRNAs) and mRNAs to facilitate mRNA translational regulation in response to envelope stress, environmental stress and changes in metabolite concentrations. Also binds with high specificity to tRNAs. The chain is RNA-binding protein Hfq from Bacillus cytotoxicus (strain DSM 22905 / CIP 110041 / 391-98 / NVH 391-98).